The following is a 420-amino-acid chain: UDP-N-acetylglucosamine 1-carboxyvinyltransferase (420 aa).

Phosphoenolpyruvate is bound at residue 22-23 (KN). Arg93 serves as a coordination point for UDP-N-acetyl-alpha-D-glucosamine. Cys117 (proton donor) is an active-site residue. At Cys117 the chain carries 2-(S-cysteinyl)pyruvic acid O-phosphothioketal. Residues 122–126 (RPVDL), Asp307, and Val329 each bind UDP-N-acetyl-alpha-D-glucosamine.

Belongs to the EPSP synthase family. MurA subfamily.

Its subcellular location is the cytoplasm. It carries out the reaction phosphoenolpyruvate + UDP-N-acetyl-alpha-D-glucosamine = UDP-N-acetyl-3-O-(1-carboxyvinyl)-alpha-D-glucosamine + phosphate. It functions in the pathway cell wall biogenesis; peptidoglycan biosynthesis. Cell wall formation. Adds enolpyruvyl to UDP-N-acetylglucosamine. This is UDP-N-acetylglucosamine 1-carboxyvinyltransferase from Hahella chejuensis (strain KCTC 2396).